The chain runs to 267 residues: Small ribosomal subunit protein uS2 (267 aa).

The segment at 232 to 267 is disordered; it reads ATVREEEFADAPAEDAKPARRAPAKKAAADKGEAQA. Positions 258–267 are enriched in basic and acidic residues; it reads AAADKGEAQA.

It belongs to the universal ribosomal protein uS2 family.

This Stenotrophomonas maltophilia (strain R551-3) protein is Small ribosomal subunit protein uS2.